The sequence spans 541 residues: Cytosolic phospholipase A2 gamma (541 aa).

The 541-residue stretch at 1–541 folds into the PLA2c domain; sequence MGSSEVSIIP…KDSARSCCLA (541 aa). Ser-82 (nucleophile) is an active-site residue. A required for lipid droplet localization region spans residues 260 to 292; the sequence is LTLKGLWRRAVANAKSIGHLIFARLLRLQESSQ. Position 337 is a phosphoserine (Ser-337). Asp-385 (proton acceptor) is an active-site residue. Cys-538 is modified (cysteine methyl ester). Residue Cys-538 is the site of S-farnesyl cysteine attachment. Residues 539–541 constitute a propeptide, removed in mature form; the sequence is CLA.

In terms of assembly, (Microbial infection) Interacts with HCV non-structural protein 4B/NS4B; this interaction likely initiates the recruitment of replication complexes to lipid droplets. In terms of tissue distribution, highly expressed in heart and skeletal muscle.

Its subcellular location is the cell membrane. The protein resides in the endoplasmic reticulum membrane. It is found in the mitochondrion membrane. It localises to the lipid droplet. It carries out the reaction a 1,2-diacyl-sn-glycero-3-phosphocholine + H2O = a 1-acyl-sn-glycero-3-phosphocholine + a fatty acid + H(+). The catalysed reaction is a 1-O-alkyl-2-acyl-sn-glycero-3-phosphocholine + H2O = a 1-O-alkyl-sn-glycero-3-phosphocholine + a fatty acid + H(+). It catalyses the reaction 1,2-dihexadecanoyl-sn-glycero-3-phosphocholine + H2O = 1-hexadecanoyl-sn-glycero-3-phosphocholine + hexadecanoate + H(+). The enzyme catalyses 1-hexadecanoyl-2-(9Z-octadecenoyl)-sn-glycero-3-phosphocholine + H2O = 1-hexadecanoyl-sn-glycero-3-phosphocholine + (9Z)-octadecenoate + H(+). It carries out the reaction 1-hexadecanoyl-2-(9Z,12Z-octadecadienoyl)-sn-glycero-3-phosphocholine + H2O = (9Z,12Z)-octadecadienoate + 1-hexadecanoyl-sn-glycero-3-phosphocholine + H(+). The catalysed reaction is 1-hexadecanoyl-2-(5Z,8Z,11Z,14Z-eicosatetraenoyl)-sn-glycero-3-phosphocholine + H2O = 1-hexadecanoyl-sn-glycero-3-phosphocholine + (5Z,8Z,11Z,14Z)-eicosatetraenoate + H(+). It catalyses the reaction 1-O-hexadecyl-2-(5Z,8Z,11Z,14Z)-eicosatetraenoyl-sn-glycero-3-phosphocholine + H2O = 1-O-hexadecyl-sn-glycero-3-phosphocholine + (5Z,8Z,11Z,14Z)-eicosatetraenoate + H(+). The enzyme catalyses 1-hexadecanoyl-2-(5Z,8Z,11Z,14Z-eicosatetraenoyl)-sn-glycero-3-phosphocholine + H2O = 2-(5Z,8Z,11Z,14Z)-eicosatetraenoyl-sn-glycero-3-phosphocholine + hexadecanoate + H(+). It carries out the reaction a 1-acyl-sn-glycero-3-phosphocholine + H2O = sn-glycerol 3-phosphocholine + a fatty acid + H(+). The catalysed reaction is 1-hexadecanoyl-sn-glycero-3-phosphocholine + H2O = sn-glycerol 3-phosphocholine + hexadecanoate + H(+). It catalyses the reaction 2 1-hexadecanoyl-sn-glycero-3-phosphocholine = 1,2-dihexadecanoyl-sn-glycero-3-phosphocholine + sn-glycerol 3-phosphocholine. The enzyme catalyses 1-hexadecanoyl-sn-glycero-3-phosphoethanolamine + 1-hexadecanoyl-sn-glycero-3-phosphocholine = 1,2-dihexadecanoyl-sn-glycero-3-phosphoethanolamine + sn-glycerol 3-phosphocholine. It carries out the reaction 1-hexadecanoyl-sn-glycero-3-phosphoethanolamine + 1-hexadecanoyl-sn-glycero-3-phosphocholine = sn-glycero-3-phosphoethanolamine + 1,2-dihexadecanoyl-sn-glycero-3-phosphocholine. The catalysed reaction is 2 1-hexadecanoyl-sn-glycero-3-phosphoethanolamine = 1,2-dihexadecanoyl-sn-glycero-3-phosphoethanolamine + sn-glycero-3-phosphoethanolamine. It catalyses the reaction 1-O-hexadecyl-sn-glycero-3-phosphocholine + 1-hexadecanoyl-sn-glycero-3-phosphocholine = 1-O-hexadecyl-2-hexadecanoyl-sn-glycero-3-phosphocholine + sn-glycerol 3-phosphocholine. The enzyme catalyses a 1-O-(1Z-alkenyl)-sn-glycero-3-phosphoethanolamine + 1-hexadecanoyl-sn-glycero-3-phosphocholine = 1-O-(1Z)-alkenyl-2-hexadecanoyl-sn-glycero-3-phosphoethanolamine + sn-glycerol 3-phosphocholine. It carries out the reaction 1-O-hexadecyl-sn-glycero-3-phosphocholine + 1-hexadecanoyl-sn-glycero-3-phosphoethanolamine = 1-O-hexadecyl-2-hexadecanoyl-sn-glycero-3-phosphocholine + sn-glycero-3-phosphoethanolamine. The catalysed reaction is 1-octadecanoyl-2-(5Z,8Z,11Z,14Z)-eicosatetraenoyl-sn-glycero-3-phosphoethanolamine + 1-hexadecanoyl-sn-glycero-3-phosphocholine = 1-octadecanoyl-sn-glycero-3-phosphoethanolamine + 1-hexadecanoyl-2-(5Z,8Z,11Z,14Z-eicosatetraenoyl)-sn-glycero-3-phosphocholine. It catalyses the reaction 1-octadecanoyl-2-(5Z,8Z,11Z,14Z)-eicosatetraenoyl-sn-glycero-3-phosphoethanolamine + 1-O-hexadecyl-sn-glycero-3-phosphocholine = 1-octadecanoyl-sn-glycero-3-phosphoethanolamine + 1-O-hexadecyl-2-(5Z,8Z,11Z,14Z)-eicosatetraenoyl-sn-glycero-3-phosphocholine. The enzyme catalyses 1-hexadecanoyl-2-(9Z,12Z-octadecadienoyl)-sn-glycero-3-phosphocholine + a 1-O-(1Z-alkenyl)-sn-glycero-3-phosphoethanolamine = 1-O-(1Z-alkenyl)-2-(9Z,12Z-octadecadienoyl)-sn-glycero-3-phosphoethanolamine + 1-hexadecanoyl-sn-glycero-3-phosphocholine. It carries out the reaction 1-hexadecanoyl-2-(5Z,8Z,11Z,14Z-eicosatetraenoyl)-sn-glycero-3-phosphocholine + a 1-O-(1Z-alkenyl)-sn-glycero-3-phosphoethanolamine = 1-O-(1Z)-alkenyl-2-(5Z,8Z,11Z,14Z)-eicosatetraenoyl-sn-glycero-3-phosphoethanolamine + 1-hexadecanoyl-sn-glycero-3-phosphocholine. Not regulated by calcium, coenzyme A or ATP. Lysophospholipase activity is inhibited by palmitoyl-CoA. Lysophospholipase and O-acyltransferase activities are inhibited by methylarachidonoylfluorophosphonate. Lysophospholipase activity is inhibited by phosphatidate or lysophosphatidate. O-acyltransferase activity is up-regulated at low concentration (10-20 uM) of phosphatidate or lysophosphatidate, but inhibited at higher concentrations. Its function is as follows. Calcium-independent phospholipase, lysophospholipase and O-acyltransferase involved in phospholipid remodeling with implications in endoplasmic reticulum membrane homeostasis and lipid droplet biogenesis. Preferentially hydrolyzes the ester bond of the fatty acyl group attached at the sn-2 position of phospholipids with choline and ethanolamine head groups, producing lysophospholipids that are used in deacylation-reacylation cycles. Transfers the sn-1 fatty acyl from one lysophospholipid molecule to the sn-2 position of another lysophospholipid to form diacyl, alkylacyl and alkenylacyl glycerophospholipids. Cleaves ester bonds but not alkyl or alkenyl ether bonds at sn-1 position of lysophospholipids. Catalyzes sn-2 fatty acyl transfer from phospholipids to the sn-2 position of 1-O-alkyl or 1-O-alkenyl lysophospholipids with lower efficiency. In response to dietary fatty acids, may play a role in the formation of nascent lipid droplets from the endoplasmic reticulum likely by regulating the phospholipid composition of these organelles. (Microbial infection) May play a role in replication and assembly of human hepatitis C virus (HCV). In response to HCV infection, promotes remodeling of host endoplasmic reticulum membranes to form organelle-like structures called membranous web, where HCV replication occur. Can further mediate translocation of replication complexes to lipid droplets to enable virion assembly. Functionally, (Microbial infection) May facilitate human T-lymphotropic virus type 1 (HTLV-1) infection by promoting leukotriene B4 (LTB4) biosynthesis. LTB4 acts as a chemoattractant for HTLV-1-infected CD4-positive T cells and favors cell to cell viral transmission. The protein is Cytosolic phospholipase A2 gamma (PLA2G4C) of Homo sapiens (Human).